Here is a 140-residue protein sequence, read N- to C-terminus: Ctenidin-1 (140 aa).

The N-terminal stretch at 1–19 (MKHLIPLIVMASVVLAVYA) is a signal peptide. Gly138 is modified (glycine amide).

Belongs to the glycine-rich peptide family. In terms of tissue distribution, expressed in hemocytes (at protein level).

The protein resides in the secreted. In terms of biological role, antimicrobial protein with bacteriostatic activity against the Gram-negative bacterium E.coli, and very weak activity against the Gram-positive bacterium S.aureus. Lacks activity against the yeast C.albicans. The chain is Ctenidin-1 from Cupiennius salei (American wandering spider).